We begin with the raw amino-acid sequence, 314 residues long: 4-hydroxy-3-methylbut-2-enyl diphosphate reductase (314 aa).

A [4Fe-4S] cluster-binding site is contributed by Cys-12. (2E)-4-hydroxy-3-methylbut-2-enyl diphosphate contacts are provided by His-41 and His-74. Residues His-41 and His-74 each coordinate dimethylallyl diphosphate. Isopentenyl diphosphate is bound by residues His-41 and His-74. Residue Cys-96 participates in [4Fe-4S] cluster binding. His-124 contacts (2E)-4-hydroxy-3-methylbut-2-enyl diphosphate. His-124 lines the dimethylallyl diphosphate pocket. Residue His-124 coordinates isopentenyl diphosphate. Glu-126 acts as the Proton donor in catalysis. Thr-167 is a binding site for (2E)-4-hydroxy-3-methylbut-2-enyl diphosphate. Position 197 (Cys-197) interacts with [4Fe-4S] cluster. (2E)-4-hydroxy-3-methylbut-2-enyl diphosphate contacts are provided by Ser-225, Ser-226, Asn-227, and Ser-269. 4 residues coordinate dimethylallyl diphosphate: Ser-225, Ser-226, Asn-227, and Ser-269. Ser-225, Ser-226, Asn-227, and Ser-269 together coordinate isopentenyl diphosphate.

Belongs to the IspH family. Requires [4Fe-4S] cluster as cofactor.

It carries out the reaction isopentenyl diphosphate + 2 oxidized [2Fe-2S]-[ferredoxin] + H2O = (2E)-4-hydroxy-3-methylbut-2-enyl diphosphate + 2 reduced [2Fe-2S]-[ferredoxin] + 2 H(+). The enzyme catalyses dimethylallyl diphosphate + 2 oxidized [2Fe-2S]-[ferredoxin] + H2O = (2E)-4-hydroxy-3-methylbut-2-enyl diphosphate + 2 reduced [2Fe-2S]-[ferredoxin] + 2 H(+). It functions in the pathway isoprenoid biosynthesis; dimethylallyl diphosphate biosynthesis; dimethylallyl diphosphate from (2E)-4-hydroxy-3-methylbutenyl diphosphate: step 1/1. Its pathway is isoprenoid biosynthesis; isopentenyl diphosphate biosynthesis via DXP pathway; isopentenyl diphosphate from 1-deoxy-D-xylulose 5-phosphate: step 6/6. Functionally, catalyzes the conversion of 1-hydroxy-2-methyl-2-(E)-butenyl 4-diphosphate (HMBPP) into a mixture of isopentenyl diphosphate (IPP) and dimethylallyl diphosphate (DMAPP). Acts in the terminal step of the DOXP/MEP pathway for isoprenoid precursor biosynthesis. The chain is 4-hydroxy-3-methylbut-2-enyl diphosphate reductase from Aliivibrio salmonicida (strain LFI1238) (Vibrio salmonicida (strain LFI1238)).